The primary structure comprises 389 residues: Succinate--CoA ligase [ADP-forming] subunit beta (389 aa).

Positions 9-236 (KELFAKHEVP…KDATDPLELK (228 aa)) constitute an ATP-grasp domain. ATP-binding positions include Lys-45, 52–54 (GRG), Ser-94, and Glu-99. Mg(2+) is bound by residues Asn-191 and Asp-205. Residues Asn-256 and 318 to 320 (GIT) each bind substrate.

The protein belongs to the succinate/malate CoA ligase beta subunit family. As to quaternary structure, heterotetramer of two alpha and two beta subunits. The cofactor is Mg(2+).

The catalysed reaction is succinate + ATP + CoA = succinyl-CoA + ADP + phosphate. It carries out the reaction GTP + succinate + CoA = succinyl-CoA + GDP + phosphate. Its pathway is carbohydrate metabolism; tricarboxylic acid cycle; succinate from succinyl-CoA (ligase route): step 1/1. Succinyl-CoA synthetase functions in the citric acid cycle (TCA), coupling the hydrolysis of succinyl-CoA to the synthesis of either ATP or GTP and thus represents the only step of substrate-level phosphorylation in the TCA. The beta subunit provides nucleotide specificity of the enzyme and binds the substrate succinate, while the binding sites for coenzyme A and phosphate are found in the alpha subunit. The polypeptide is Succinate--CoA ligase [ADP-forming] subunit beta (Rhodococcus opacus (strain B4)).